Reading from the N-terminus, the 427-residue chain is Adenylosuccinate synthetase (427 aa).

GTP is bound by residues 12–18 (GDEGKGK) and 40–42 (GHT). The active-site Proton acceptor is Asp-13. Positions 13 and 40 each coordinate Mg(2+). Residues 13 to 16 (DEGK), 38 to 41 (NAGH), Thr-130, Arg-144, Gln-224, Thr-239, and Arg-303 each bind IMP. The Proton donor role is filled by His-41. A substrate-binding site is contributed by 299-305 (VTTGRAR). Residues Arg-305, 331–333 (KID), and 413–415 (SVG) each bind GTP.

It belongs to the adenylosuccinate synthetase family. In terms of assembly, homodimer. Mg(2+) is required as a cofactor.

It localises to the cytoplasm. The enzyme catalyses IMP + L-aspartate + GTP = N(6)-(1,2-dicarboxyethyl)-AMP + GDP + phosphate + 2 H(+). The protein operates within purine metabolism; AMP biosynthesis via de novo pathway; AMP from IMP: step 1/2. In terms of biological role, plays an important role in the de novo pathway of purine nucleotide biosynthesis. Catalyzes the first committed step in the biosynthesis of AMP from IMP. The protein is Adenylosuccinate synthetase of Clostridium novyi (strain NT).